The primary structure comprises 254 residues: uncharacterized protein (254 aa).

Transmembrane regions (helical) follow at residues Leu-41 to Ile-61, Ile-64 to Phe-84, Ile-91 to Leu-111, Leu-125 to Ala-145, Pro-146 to Phe-166, Phe-172 to Leu-192, Met-204 to Pro-224, and Leu-232 to Leu-252.

It belongs to the TatC family.

Its subcellular location is the plastid. The protein localises to the chloroplast membrane. This is an uncharacterized protein from Pyropia yezoensis (Susabi-nori).